Here is a 329-residue protein sequence, read N- to C-terminus: Ketol-acid reductoisomerase (NADP(+)) (329 aa).

The KARI N-terminal Rossmann domain maps to 2-181 (VQKYYESDAD…GATRAVVFET (180 aa)). NADP(+) is bound by residues 25–28 (YGSQ), arginine 48, serine 52, and 82–85 (DENQ). Residue histidine 107 is part of the active site. Glycine 133 contributes to the NADP(+) binding site. The region spanning 182 to 327 (TFAEETETDL…AEIRGFMPQF (146 aa)) is the KARI C-terminal knotted domain. Residues aspartate 190, glutamate 194, glutamate 226, and glutamate 230 each contribute to the Mg(2+) site. A substrate-binding site is contributed by serine 251.

It belongs to the ketol-acid reductoisomerase family. Requires Mg(2+) as cofactor.

The enzyme catalyses (2R)-2,3-dihydroxy-3-methylbutanoate + NADP(+) = (2S)-2-acetolactate + NADPH + H(+). The catalysed reaction is (2R,3R)-2,3-dihydroxy-3-methylpentanoate + NADP(+) = (S)-2-ethyl-2-hydroxy-3-oxobutanoate + NADPH + H(+). The protein operates within amino-acid biosynthesis; L-isoleucine biosynthesis; L-isoleucine from 2-oxobutanoate: step 2/4. It functions in the pathway amino-acid biosynthesis; L-valine biosynthesis; L-valine from pyruvate: step 2/4. In terms of biological role, involved in the biosynthesis of branched-chain amino acids (BCAA). Catalyzes an alkyl-migration followed by a ketol-acid reduction of (S)-2-acetolactate (S2AL) to yield (R)-2,3-dihydroxy-isovalerate. In the isomerase reaction, S2AL is rearranged via a Mg-dependent methyl migration to produce 3-hydroxy-3-methyl-2-ketobutyrate (HMKB). In the reductase reaction, this 2-ketoacid undergoes a metal-dependent reduction by NADPH to yield (R)-2,3-dihydroxy-isovalerate. This is Ketol-acid reductoisomerase (NADP(+)) from Methanoculleus marisnigri (strain ATCC 35101 / DSM 1498 / JR1).